A 300-amino-acid polypeptide reads, in one-letter code: Ribonuclease HIII (300 aa).

The region spanning 86–300 (RSRIGVDESG…FNEVLGSGNQ (215 aa)) is the RNase H type-2 domain. Residues D92, E93, and D196 each contribute to the a divalent metal cation site.

It belongs to the RNase HII family. RnhC subfamily. The cofactor is Mn(2+). Mg(2+) is required as a cofactor.

It is found in the cytoplasm. The enzyme catalyses Endonucleolytic cleavage to 5'-phosphomonoester.. Its function is as follows. Endonuclease that specifically degrades the RNA of RNA-DNA hybrids. In Chlamydia trachomatis serovar A (strain ATCC VR-571B / DSM 19440 / HAR-13), this protein is Ribonuclease HIII.